A 782-amino-acid chain; its full sequence is Phosphoribosylformylglycinamidine synthase subunit PurL (782 aa).

H48 is an active-site residue. ATP is bound by residues Y51 and K90. Mg(2+) is bound at residue E92. Residues 93 to 96 (SHNH) and R115 each bind substrate. H94 serves as the catalytic Proton acceptor. Position 116 (D116) interacts with Mg(2+). Q239 contacts substrate. D267 contacts Mg(2+). 311–313 (ESQ) contributes to the substrate binding site. D525 and G562 together coordinate ATP. N563 is a Mg(2+) binding site. S565 is a binding site for substrate.

The protein belongs to the FGAMS family. As to quaternary structure, monomer. Part of the FGAM synthase complex composed of 1 PurL, 1 PurQ and 2 PurS subunits.

It localises to the cytoplasm. It carries out the reaction N(2)-formyl-N(1)-(5-phospho-beta-D-ribosyl)glycinamide + L-glutamine + ATP + H2O = 2-formamido-N(1)-(5-O-phospho-beta-D-ribosyl)acetamidine + L-glutamate + ADP + phosphate + H(+). It participates in purine metabolism; IMP biosynthesis via de novo pathway; 5-amino-1-(5-phospho-D-ribosyl)imidazole from N(2)-formyl-N(1)-(5-phospho-D-ribosyl)glycinamide: step 1/2. Its function is as follows. Part of the phosphoribosylformylglycinamidine synthase complex involved in the purines biosynthetic pathway. Catalyzes the ATP-dependent conversion of formylglycinamide ribonucleotide (FGAR) and glutamine to yield formylglycinamidine ribonucleotide (FGAM) and glutamate. The FGAM synthase complex is composed of three subunits. PurQ produces an ammonia molecule by converting glutamine to glutamate. PurL transfers the ammonia molecule to FGAR to form FGAM in an ATP-dependent manner. PurS interacts with PurQ and PurL and is thought to assist in the transfer of the ammonia molecule from PurQ to PurL. This Nostoc sp. (strain PCC 7120 / SAG 25.82 / UTEX 2576) protein is Phosphoribosylformylglycinamidine synthase subunit PurL.